A 141-amino-acid chain; its full sequence is Large ribosomal subunit protein uL16 (141 aa).

Belongs to the universal ribosomal protein uL16 family. Part of the 50S ribosomal subunit.

Binds 23S rRNA and is also seen to make contacts with the A and possibly P site tRNAs. This Campylobacter hominis (strain ATCC BAA-381 / DSM 21671 / CCUG 45161 / LMG 19568 / NCTC 13146 / CH001A) protein is Large ribosomal subunit protein uL16.